The chain runs to 295 residues: ATP synthase gamma chain (295 aa).

The protein belongs to the ATPase gamma chain family. F-type ATPases have 2 components, CF(1) - the catalytic core - and CF(0) - the membrane proton channel. CF(1) has five subunits: alpha(3), beta(3), gamma(1), delta(1), epsilon(1). CF(0) has three main subunits: a, b and c.

It is found in the cell membrane. In terms of biological role, produces ATP from ADP in the presence of a proton gradient across the membrane. The gamma chain is believed to be important in regulating ATPase activity and the flow of protons through the CF(0) complex. This is ATP synthase gamma chain from Desulforudis audaxviator (strain MP104C).